The sequence spans 92 residues: Large ribosomal subunit protein eL34 (92 aa).

The protein belongs to the eukaryotic ribosomal protein eL34 family.

In Staphylothermus marinus (strain ATCC 43588 / DSM 3639 / JCM 9404 / F1), this protein is Large ribosomal subunit protein eL34.